Here is a 222-residue protein sequence, read N- to C-terminus: Phosphoribosylformylglycinamidine synthase subunit PurQ (222 aa).

The region spanning 3–222 (AAVLVFPGSN…ASLAAALVAA (220 aa)) is the Glutamine amidotransferase type-1 domain. C86 acts as the Nucleophile in catalysis. Active-site residues include H194 and E196.

Part of the FGAM synthase complex composed of 1 PurL, 1 PurQ and 2 PurS subunits.

The protein localises to the cytoplasm. It carries out the reaction N(2)-formyl-N(1)-(5-phospho-beta-D-ribosyl)glycinamide + L-glutamine + ATP + H2O = 2-formamido-N(1)-(5-O-phospho-beta-D-ribosyl)acetamidine + L-glutamate + ADP + phosphate + H(+). It catalyses the reaction L-glutamine + H2O = L-glutamate + NH4(+). It functions in the pathway purine metabolism; IMP biosynthesis via de novo pathway; 5-amino-1-(5-phospho-D-ribosyl)imidazole from N(2)-formyl-N(1)-(5-phospho-D-ribosyl)glycinamide: step 1/2. In terms of biological role, part of the phosphoribosylformylglycinamidine synthase complex involved in the purines biosynthetic pathway. Catalyzes the ATP-dependent conversion of formylglycinamide ribonucleotide (FGAR) and glutamine to yield formylglycinamidine ribonucleotide (FGAM) and glutamate. The FGAM synthase complex is composed of three subunits. PurQ produces an ammonia molecule by converting glutamine to glutamate. PurL transfers the ammonia molecule to FGAR to form FGAM in an ATP-dependent manner. PurS interacts with PurQ and PurL and is thought to assist in the transfer of the ammonia molecule from PurQ to PurL. The sequence is that of Phosphoribosylformylglycinamidine synthase subunit PurQ from Jannaschia sp. (strain CCS1).